The primary structure comprises 451 residues: Glutamyl-tRNA reductase (451 aa).

Substrate-binding positions include threonine 47–arginine 50, serine 132, glutamate 137–glutamine 139, and glutamine 143. The active-site Nucleophile is cysteine 48. An NADP(+)-binding site is contributed by alanine 212–asparagine 217.

It belongs to the glutamyl-tRNA reductase family. In terms of assembly, homodimer.

It carries out the reaction (S)-4-amino-5-oxopentanoate + tRNA(Glu) + NADP(+) = L-glutamyl-tRNA(Glu) + NADPH + H(+). It functions in the pathway porphyrin-containing compound metabolism; protoporphyrin-IX biosynthesis; 5-aminolevulinate from L-glutamyl-tRNA(Glu): step 1/2. Catalyzes the NADPH-dependent reduction of glutamyl-tRNA(Glu) to glutamate 1-semialdehyde (GSA). The polypeptide is Glutamyl-tRNA reductase (Psychrobacter sp. (strain PRwf-1)).